The following is a 546-amino-acid chain: Undecaprenyl phosphate-alpha-4-amino-4-deoxy-L-arabinose arabinosyl transferase (546 aa).

12 helical membrane passes run isoleucine 6–leucine 26, alanine 87–phenylalanine 107, alanine 113–serine 133, leucine 177–isoleucine 197, tryptophan 208–histidine 228, tyrosine 260–isoleucine 280, serine 289–alanine 309, leucine 313–isoleucine 333, isoleucine 345–phenylalanine 365, proline 380–alanine 400, tyrosine 410–isoleucine 430, and alanine 450–phenylalanine 467.

Belongs to the glycosyltransferase 83 family.

It localises to the cell inner membrane. The catalysed reaction is 4-amino-4-deoxy-alpha-L-arabinopyranosyl di-trans,octa-cis-undecaprenyl phosphate + lipid IVA = lipid IIA + di-trans,octa-cis-undecaprenyl phosphate.. Its pathway is lipopolysaccharide metabolism; 4-amino-4-deoxy-beta-L-arabinose-lipid A biosynthesis. Its function is as follows. Catalyzes the transfer of the L-Ara4N moiety of the glycolipid undecaprenyl phosphate-alpha-L-Ara4N to lipid A. The modified arabinose is attached to lipid A and is required for resistance to polymyxin and cationic antimicrobial peptides. In Shewanella sediminis (strain HAW-EB3), this protein is Undecaprenyl phosphate-alpha-4-amino-4-deoxy-L-arabinose arabinosyl transferase.